Here is a 199-residue protein sequence, read N- to C-terminus: Large ribosomal subunit protein bL25 (199 aa).

Belongs to the bacterial ribosomal protein bL25 family. CTC subfamily. In terms of assembly, part of the 50S ribosomal subunit; part of the 5S rRNA/L5/L18/L25 subcomplex. Contacts the 5S rRNA. Binds to the 5S rRNA independently of L5 and L18.

In terms of biological role, this is one of the proteins that binds to the 5S RNA in the ribosome where it forms part of the central protuberance. The chain is Large ribosomal subunit protein bL25 from Chlorobaculum tepidum (strain ATCC 49652 / DSM 12025 / NBRC 103806 / TLS) (Chlorobium tepidum).